Consider the following 181-residue polypeptide: Large ribosomal subunit protein uL10 (181 aa).

This sequence belongs to the universal ribosomal protein uL10 family. In terms of assembly, part of the ribosomal stalk of the 50S ribosomal subunit. The N-terminus interacts with L11 and the large rRNA to form the base of the stalk. The C-terminus forms an elongated spine to which L12 dimers bind in a sequential fashion forming a multimeric L10(L12)X complex.

Its function is as follows. Forms part of the ribosomal stalk, playing a central role in the interaction of the ribosome with GTP-bound translation factors. This Acidobacterium capsulatum (strain ATCC 51196 / DSM 11244 / BCRC 80197 / JCM 7670 / NBRC 15755 / NCIMB 13165 / 161) protein is Large ribosomal subunit protein uL10.